A 352-amino-acid polypeptide reads, in one-letter code: SKP1-like protein 20 (352 aa).

The tract at residues 108-167 is interaction with the F-box domain of F-box proteins; sequence TSAADSLQLKPLVDLTSRALARIIEGKNPEEIREIFHLPDDLTEEEKLEPLKNSMDDPRI. Disordered regions lie at residues 214 to 251 and 267 to 288; these read KAVK…RSKQ and LLSA…DIDD. Residues 216–230 show a composition bias toward basic residues; the sequence is VKMSKGKKKKKKKKD. A compositionally biased stretch (basic and acidic residues) spans 239-249; that stretch reads IHDKESHDLRS.

Belongs to the SKP1 family. As to quaternary structure, part of a SCF (SKP1-cullin-F-box) protein ligase complex. As to expression, expressed in young seedlings, roots, leaves, floral stems, inflorescences, and siliques.

The protein resides in the nucleus. The protein operates within protein modification; protein ubiquitination. Involved in ubiquitination and subsequent proteasomal degradation of target proteins. Together with CUL1, RBX1 and a F-box protein, it forms a SCF E3 ubiquitin ligase complex. The functional specificity of this complex depends on the type of F-box protein. In the SCF complex, it serves as an adapter that links the F-box protein to CUL1. The protein is SKP1-like protein 20 (ASK20) of Arabidopsis thaliana (Mouse-ear cress).